We begin with the raw amino-acid sequence, 332 residues long: Methionine synthase (332 aa).

The Zn(2+) site is built by H211, C213, and C296.

It belongs to the archaeal MetE family. The cofactor is Zn(2+).

It functions in the pathway amino-acid biosynthesis; L-methionine biosynthesis via de novo pathway. In terms of biological role, catalyzes the transfer of a methyl group to L-homocysteine resulting in methionine formation. The physiological methyl donor is unknown. The chain is Methionine synthase from Saccharolobus islandicus (strain Y.G.57.14 / Yellowstone #1) (Sulfolobus islandicus).